The following is a 1374-amino-acid chain: MIVIRNWQRISYLSFCRFSTRSLSIQQFQKTPLLLVVRQQGSARLKMTSSPPEIVPQQPLDALLLNKTDTEQEIFLTKYPNYDGRDILIAILDTGVDPSLPGMQVTTTGERKMFDVIDCSGAGDVDTSITRTVKDGVIEGISGRKLAIPEKWKCPTGQYHVGLKPIFELYTKGVKSRVISERKEDVVGPSHNIAASEALKQLTEHEKVVGGTSEKTSDKWAREDFACKVDFLKSMASVADVGPVADVVTWHDGEMWRVCIDTSFRGRLGLGNVLGTFRETGDYAYLTNKDSVVYTVRVSPDGNLTEIVVPSGAHGSHVAGIAAANYPDNPQKNGLAPGAKILSLNIGDHRLGAMETGQAMTRAFNMCAELNVDIINMSFGEGTHLPDVGRVIEEARRLINRRGVIYVCSAGNQGPALSTVGAPGGTTTGVIGIGAYLTSESADTLYGVYKPVESSIYPWSSRGPCQDGKLGVSLVAPAAAFAGVPQYCRQSMQMMNGTSMSSPNAAGNVACMLSGLKQNNLKWTPYTVRMALENTAYMLPHIESFSQGQGMIKIATAYEKLSEILVNKVFPPRLTHFEINVSNHCKKSKGVYVREPNWNGPQEFTIGVEPIFQNHLSDNNLPAISFEKQIILQSTAPWVSHPQTMFVVAQERTMVVTVDASKAPKGANYTEIVGIDTADPSLGPIFRIPVTVINPEKVAVDQYTSRLVGKSGVTERRFVEVPSWATSAKITLRSTNKDEMDRFTLHTVYIEDDKCSRNTETQKIQGPIGNEWSKSITVQGGKTLEACVVRAWSRGKNPVDVDMTIDFFGVKKPTSISLIHGATNTPIRFQAAPTKSIDVSPSISLKSLVVSLKPQSAKVEPLGPRDMFLTSGLQINRLLLTYQLKVQKPSEVQLQLAGLTPYLYESPVDCVLFQIFGANKSFVGASSSYPDRWTQKLEKGDYTIQAQIRYPDDQVLQGMKELPLLVHVKLGNKISVDLAASASDATLGKECKFAGKALLPNQEMTVYAMNIADDKLPKTIVPTSGSFLAGTFSALKDSDLSDVDKSEVIYFLSEYSTRPTKGLSMVTTKKDTNQNQEMTDAIRDLEVSWVQKLTDEKAAKEFFEACLQKYPDHLPLLQNRVKQLMQAKLVDQTPENVQKIIELCGQILQITKPNETLQFSSVKQEHDDDLLTVDKWLALTGGSEDQRKDVVKLISQFEERKKSIILALQALSSLEQDIEVRKSKFDVPASLRFGGITPLIFGGKQGEVINKKSEGYEALKSKSEQIDATVSEELKKLDSNWTGNQFYVKLLVWLSADDTKTALISAKHAAALGQFGRCAKLLNKAGDELKSSATDSQAVDTSLAEVCESLEWNHLATHFKNSALIKNRTSYRLF.

A Peptidase S8 domain is found at 62 to 558 (ALLLNKTDTE…QGMIKIATAY (497 aa)). Active-site charge relay system residues include Asp-93, His-314, and Ser-499.

The protein belongs to the peptidase S8 family. In terms of tissue distribution, expressed in intestinal fat-storing cells and some head neurons.

It catalyses the reaction Release of an N-terminal tripeptide from a polypeptide.. Functionally, component of the proteolytic cascade acting downstream of the 26S proteasome in the ubiquitin-proteasome pathway. Has a role in regulation of fat storage. The sequence is that of Tripeptidyl-peptidase 2 (tpp-2) from Caenorhabditis elegans.